A 625-amino-acid chain; its full sequence is Phosphomethylpyrimidine synthase (625 aa).

Substrate-binding positions include N231, M260, Y289, H325, 345-347 (SRG), 386-389 (DGLR), and E425. H429 lines the Zn(2+) pocket. A substrate-binding site is contributed by Y452. H493 is a Zn(2+) binding site. [4Fe-4S] cluster-binding residues include C573, C576, and C581.

This sequence belongs to the ThiC family. As to quaternary structure, homodimer. The cofactor is [4Fe-4S] cluster.

It catalyses the reaction 5-amino-1-(5-phospho-beta-D-ribosyl)imidazole + S-adenosyl-L-methionine = 4-amino-2-methyl-5-(phosphooxymethyl)pyrimidine + CO + 5'-deoxyadenosine + formate + L-methionine + 3 H(+). The protein operates within cofactor biosynthesis; thiamine diphosphate biosynthesis. Its function is as follows. Catalyzes the synthesis of the hydroxymethylpyrimidine phosphate (HMP-P) moiety of thiamine from aminoimidazole ribotide (AIR) in a radical S-adenosyl-L-methionine (SAM)-dependent reaction. In Acinetobacter baumannii (strain SDF), this protein is Phosphomethylpyrimidine synthase.